A 225-amino-acid polypeptide reads, in one-letter code: UPF0700 transmembrane protein YoaK (225 aa).

The next 6 helical transmembrane spans lie at 10–30 (LLSL…LSLG), 56–76 (VFNS…ATLM), 99–119 (ILFV…HILI), 137–157 (GIAG…LEDI), 174–194 (TVLR…VALA), and 197–217 (DFYH…MMTA).

It belongs to the UPF0700 family.

It is found in the cell membrane. In Bacillus subtilis (strain 168), this protein is UPF0700 transmembrane protein YoaK (yoaK).